Here is a 122-residue protein sequence, read N- to C-terminus: Small ribosomal subunit protein uS13 (122 aa).

Residues 99-122 (RGQRTHTNARTRKGPAKAIAGKKK) form a disordered region.

Belongs to the universal ribosomal protein uS13 family. In terms of assembly, part of the 30S ribosomal subunit. Forms a loose heterodimer with protein S19. Forms two bridges to the 50S subunit in the 70S ribosome.

In terms of biological role, located at the top of the head of the 30S subunit, it contacts several helices of the 16S rRNA. In the 70S ribosome it contacts the 23S rRNA (bridge B1a) and protein L5 of the 50S subunit (bridge B1b), connecting the 2 subunits; these bridges are implicated in subunit movement. Contacts the tRNAs in the A and P-sites. The polypeptide is Small ribosomal subunit protein uS13 (Cereibacter sphaeroides (strain ATCC 17025 / ATH 2.4.3) (Rhodobacter sphaeroides)).